Consider the following 29-residue polypeptide: Cycloviolacin-O16 (29 aa).

A cross-link (cyclopeptide (Gly-Asn)) is located at residues 1 to 29 (GLPCGETCFTGKCYTPGCSCSYPICKKIN). 3 cysteine pairs are disulfide-bonded: Cys4-Cys18, Cys8-Cys20, and Cys13-Cys25.

Post-translationally, this is a cyclic peptide.

Its function is as follows. Probably participates in a plant defense mechanism. The sequence is that of Cycloviolacin-O16 from Viola odorata (Sweet violet).